A 465-amino-acid polypeptide reads, in one-letter code: Ribulose bisphosphate carboxylase large chain (465 aa).

Position 4 is an N6,N6,N6-trimethyllysine (lysine 4). Asparagine 113 and threonine 163 together coordinate substrate. Lysine 165 acts as the Proton acceptor in catalysis. Lysine 167 serves as a coordination point for substrate. Mg(2+) contacts are provided by lysine 191, aspartate 193, and glutamate 194. Lysine 191 bears the N6-carboxylysine mark. Residue histidine 284 is the Proton acceptor of the active site. 3 residues coordinate substrate: arginine 285, histidine 317, and serine 369.

Belongs to the RuBisCO large chain family. Type I subfamily. Heterohexadecamer of 8 large chains and 8 small chains; disulfide-linked. The disulfide link is formed within the large subunit homodimers. Mg(2+) is required as a cofactor. In terms of processing, the disulfide bond which can form in the large chain dimeric partners within the hexadecamer appears to be associated with oxidative stress and protein turnover.

It is found in the plastid. It localises to the chloroplast. It catalyses the reaction 2 (2R)-3-phosphoglycerate + 2 H(+) = D-ribulose 1,5-bisphosphate + CO2 + H2O. The catalysed reaction is D-ribulose 1,5-bisphosphate + O2 = 2-phosphoglycolate + (2R)-3-phosphoglycerate + 2 H(+). Functionally, ruBisCO catalyzes two reactions: the carboxylation of D-ribulose 1,5-bisphosphate, the primary event in carbon dioxide fixation, as well as the oxidative fragmentation of the pentose substrate in the photorespiration process. Both reactions occur simultaneously and in competition at the same active site. This is Ribulose bisphosphate carboxylase large chain from Passiflora quadrangularis (Grenadine).